We begin with the raw amino-acid sequence, 443 residues long: Deoxyguanosinetriphosphate triphosphohydrolase-like protein (443 aa).

Residues 61-246 enclose the HD domain; sequence RLTHSLEVAC…MEAADDICYG (186 aa).

Belongs to the dGTPase family. Type 3 subfamily.

This chain is Deoxyguanosinetriphosphate triphosphohydrolase-like protein, found in Pseudomonas aeruginosa (strain LESB58).